The chain runs to 243 residues: Outer membrane protein A (243 aa).

5 beta stranded membrane passes run 1–8 (LTAKLGYP), 13–21 (LDIYTRLGG), 47–56 (PVFAGGLEWA), 61–68 (IATRLEYQ), and 87–95 (LLSVGVSYR). Tandem repeats lie at residues 107 to 108 (AP), 109 to 110 (AP), 111 to 112 (AP), and 113 to 114 (AP). The interval 107-114 (APAPAPAP) is 4 X 2 AA tandem repeats of A-P. Residues 116–243 (VQTKHFTLKS…RRVEIEVKGI (128 aa)) enclose the OmpA-like domain. Cys217 and Cys229 are disulfide-bonded.

The protein belongs to the outer membrane OOP (TC 1.B.6) superfamily. OmpA family. Monomer and homodimer.

It localises to the cell outer membrane. In terms of biological role, with TolR probably plays a role in maintaining the position of the peptidoglycan cell wall in the periplasm. Acts as a porin with low permeability that allows slow penetration of small solutes; an internal gate slows down solute passage. The sequence is that of Outer membrane protein A from Atlantibacter hermannii (Escherichia hermannii).